The chain runs to 497 residues: 3-octaprenyl-4-hydroxybenzoate carboxy-lyase (497 aa).

Asn-175 provides a ligand contact to Mn(2+). Prenylated FMN-binding positions include Ile-178 to Arg-180, Arg-192 to Leu-194, and Arg-197 to Gly-198. Glu-241 contributes to the Mn(2+) binding site. Asp-290 (proton donor) is an active-site residue.

Belongs to the UbiD family. As to quaternary structure, homohexamer. The cofactor is prenylated FMN. It depends on Mn(2+) as a cofactor.

Its subcellular location is the cell membrane. It catalyses the reaction a 4-hydroxy-3-(all-trans-polyprenyl)benzoate + H(+) = a 2-(all-trans-polyprenyl)phenol + CO2. It functions in the pathway cofactor biosynthesis; ubiquinone biosynthesis. Functionally, catalyzes the decarboxylation of 3-octaprenyl-4-hydroxy benzoate to 2-octaprenylphenol, an intermediate step in ubiquinone biosynthesis. This chain is 3-octaprenyl-4-hydroxybenzoate carboxy-lyase, found in Shigella sonnei (strain Ss046).